Consider the following 124-residue polypeptide: Fluoride-specific ion channel FluC (124 aa).

A run of 4 helical transmembrane segments spans residues 5–25 (LVVFVGAGLGGALRHGVNLAA), 36–56 (TMIINIAGSLAMGLLTGWFAV), 70–90 (TGILGGFTTFSTFSLEAFLLM), and 100–120 (LYVLGSVAAGIAGVGASLAVI). 2 residues coordinate Na(+): Gly74 and Thr77.

Belongs to the fluoride channel Fluc/FEX (TC 1.A.43) family.

It localises to the cell inner membrane. It catalyses the reaction fluoride(in) = fluoride(out). Na(+) is not transported, but it plays an essential structural role and its presence is essential for fluoride channel function. In terms of biological role, fluoride-specific ion channel. Important for reducing fluoride concentration in the cell, thus reducing its toxicity. This Methylobacterium nodulans (strain LMG 21967 / CNCM I-2342 / ORS 2060) protein is Fluoride-specific ion channel FluC.